The chain runs to 236 residues: LHFPL tetraspan subfamily member 3 protein (236 aa).

4 helical membrane passes run 36 to 56 (IGVL…VCFI), 110 to 130 (FFIG…TLFF), 140 to 160 (ICAW…MIFP), and 191 to 211 (ILAI…FVLG).

This sequence belongs to the LHFP family.

It localises to the membrane. The sequence is that of LHFPL tetraspan subfamily member 3 protein from Homo sapiens (Human).